A 547-amino-acid polypeptide reads, in one-letter code: Fumarate reductase (CoM/CoB) subunit A (547 aa).

This sequence belongs to the FAD-dependent oxidoreductase 2 family. As to quaternary structure, subunit A of the heterodimeric fumarate reductase of methanogenic Archaea, composed of subunits A (TfrA) and B (TfrB). Requires an oxidized flavin as cofactor.

It localises to the cytoplasm. The catalysed reaction is coenzyme B + coenzyme M + fumarate = coenzyme M-coenzyme B heterodisulfide + succinate. Functionally, catalyzes the reduction of fumarate with reduced coenzyme M (CoM-S-H) and coenzyme B (CoB-S-H). In vitro, is able to reduces fumarate with reduced benzyl viologen, oxidize CoM-S-H and CoB-S-H to CoM-S-S-CoB with methylene blue, and reduce CoM-S-S-CoB with reduced benzyl viologen. The enzyme has specificity for the two thiol compounds as the CoB--CoM heterodisulfide reductase. The enzyme is very sensitive to oxygen. This Methanothermobacter marburgensis (strain ATCC BAA-927 / DSM 2133 / JCM 14651 / NBRC 100331 / OCM 82 / Marburg) (Methanobacterium thermoautotrophicum) protein is Fumarate reductase (CoM/CoB) subunit A.